We begin with the raw amino-acid sequence, 375 residues long: F-box/kelch-repeat protein At4g39580 (375 aa).

Positions 20-66 (PTTNLFLPDDILLSSLSRISRLYYPTFSLVSKSFRSLIASPELYQTR) constitute an F-box domain. 3 Kelch repeats span residues 132–178 (NIYA…VLDG), 179–225 (KIYV…KSVG), and 229–269 (KYHL…VINN).

In Arabidopsis thaliana (Mouse-ear cress), this protein is F-box/kelch-repeat protein At4g39580.